The chain runs to 472 residues: Siroheme synthase 1 (472 aa).

Residues 1–203 are precorrin-2 dehydrogenase /sirohydrochlorin ferrochelatase; the sequence is MDYLPLFADL…GQLTEAENEL (203 aa). NAD(+) contacts are provided by residues 22–23 and 43–44; these read EV and QT. At Ser-128 the chain carries Phosphoserine. The segment at 215–472 is uroporphyrinogen-III C-methyltransferase; the sequence is GEVALVGAGP…AISPSVVNLA (258 aa). Residue Pro-224 coordinates S-adenosyl-L-methionine. Catalysis depends on Asp-247, which acts as the Proton acceptor. Lys-269 acts as the Proton donor in catalysis. Residues 300–302, Ile-305, 330–331, Met-382, and Gly-411 contribute to the S-adenosyl-L-methionine site; these read GGD and TA.

The protein in the N-terminal section; belongs to the precorrin-2 dehydrogenase / sirohydrochlorin ferrochelatase family. In the C-terminal section; belongs to the precorrin methyltransferase family.

The catalysed reaction is uroporphyrinogen III + 2 S-adenosyl-L-methionine = precorrin-2 + 2 S-adenosyl-L-homocysteine + H(+). It catalyses the reaction precorrin-2 + NAD(+) = sirohydrochlorin + NADH + 2 H(+). The enzyme catalyses siroheme + 2 H(+) = sirohydrochlorin + Fe(2+). The protein operates within cofactor biosynthesis; adenosylcobalamin biosynthesis; precorrin-2 from uroporphyrinogen III: step 1/1. It participates in cofactor biosynthesis; adenosylcobalamin biosynthesis; sirohydrochlorin from precorrin-2: step 1/1. Its pathway is porphyrin-containing compound metabolism; siroheme biosynthesis; precorrin-2 from uroporphyrinogen III: step 1/1. It functions in the pathway porphyrin-containing compound metabolism; siroheme biosynthesis; siroheme from sirohydrochlorin: step 1/1. The protein operates within porphyrin-containing compound metabolism; siroheme biosynthesis; sirohydrochlorin from precorrin-2: step 1/1. Multifunctional enzyme that catalyzes the SAM-dependent methylations of uroporphyrinogen III at position C-2 and C-7 to form precorrin-2 via precorrin-1. Then it catalyzes the NAD-dependent ring dehydrogenation of precorrin-2 to yield sirohydrochlorin. Finally, it catalyzes the ferrochelation of sirohydrochlorin to yield siroheme. This chain is Siroheme synthase 1, found in Yersinia pseudotuberculosis serotype I (strain IP32953).